The primary structure comprises 312 residues: Putative electron transfer flavoprotein subunit YdiR (312 aa).

254-282 (LYLTLGISGQIQHMVGGNGAKVIVAINKD) lines the FAD pocket.

It belongs to the ETF alpha-subunit/FixB family. As to quaternary structure, ydiR and YdiQ form a heterodimer.

In terms of biological role, may play a role in a redox process. The polypeptide is Putative electron transfer flavoprotein subunit YdiR (ydiR) (Escherichia coli (strain K12)).